Consider the following 229-residue polypeptide: GTP-binding protein Di-Ras3 (229 aa).

GTP-binding positions include 44-51, 63-69, 91-95, 152-155, and 182-183; these read GTAGVGKS, RHEYLPT, DSKSG, NKSD, and AK. The Effector region motif lies at 66–74; the sequence is YLPTIENTY. Cys226 is modified (cysteine methyl ester). Cys226 is lipidated: S-geranylgeranyl cysteine. Residues 227 to 229 constitute a propeptide, removed in mature form; the sequence is IIM.

The protein belongs to the small GTPase superfamily. Di-Ras family. In terms of tissue distribution, expressed in normal ovarian and breast epithelial cells but not in ovarian and breast cancers.

It is found in the cell membrane. The protein is GTP-binding protein Di-Ras3 (DIRAS3) of Homo sapiens (Human).